Consider the following 594-residue polypeptide: Glutamate decarboxylase 1 (594 aa).

Residues 1–13 show a composition bias toward low complexity; that stretch reads MASSTPSSSATSS. Positions 1 to 25 are disordered; that stretch reads MASSTPSSSATSSNAGPDPNTTNLR. The residue at position 78 (Ser78) is a Phosphoserine. 190–192 is a binding site for 4-aminobutanoate; that stretch reads QLS. The residue at position 405 (Lys405) is an N6-(pyridoxal phosphate)lysine. A 4-aminobutanoate-binding site is contributed by Arg567.

It belongs to the group II decarboxylase family. As to quaternary structure, homodimer. It depends on pyridoxal 5'-phosphate as a cofactor.

The catalysed reaction is L-glutamate + H(+) = 4-aminobutanoate + CO2. In terms of biological role, catalyzes the synthesis of the inhibitory neurotransmitter gamma-aminobutyric acid (GABA) with pyridoxal 5'-phosphate as cofactor. In Sus scrofa (Pig), this protein is Glutamate decarboxylase 1 (GAD1).